Consider the following 110-residue polypeptide: Phosphoribosyl-ATP pyrophosphatase (110 aa).

Belongs to the PRA-PH family.

The protein resides in the cytoplasm. The catalysed reaction is 1-(5-phospho-beta-D-ribosyl)-ATP + H2O = 1-(5-phospho-beta-D-ribosyl)-5'-AMP + diphosphate + H(+). It functions in the pathway amino-acid biosynthesis; L-histidine biosynthesis; L-histidine from 5-phospho-alpha-D-ribose 1-diphosphate: step 2/9. The chain is Phosphoribosyl-ATP pyrophosphatase from Pseudomonas fluorescens (strain ATCC BAA-477 / NRRL B-23932 / Pf-5).